A 294-amino-acid chain; its full sequence is Serine/threonine-protein kinase Aurora-1 (294 aa).

The Protein kinase domain occupies 31-282; it reads FDIGKPLGRG…LHKLLEHPWI (252 aa). ATP is bound by residues 37 to 45 and lysine 60; that span reads LGRGKFGHV. The active-site Proton acceptor is aspartate 154. A Phosphoserine modification is found at serine 176. Threonine 185 bears the Phosphothreonine mark.

This sequence belongs to the protein kinase superfamily. Ser/Thr protein kinase family. Aurora subfamily. As to quaternary structure, interacts with TPX2. Post-translationally, phosphorylation at Thr-185 may regulate activity and degradation of AUR1 in a cell cycle dependent manner. In terms of tissue distribution, abundant in roots, flowers and flower buds, low or absent in expanded leaves, stems and siliques.

It is found in the nucleus membrane. It localises to the cytoplasm. The protein resides in the cytoskeleton. Its subcellular location is the spindle. The protein localises to the spindle pole. It is found in the phragmoplast. The catalysed reaction is L-seryl-[protein] + ATP = O-phospho-L-seryl-[protein] + ADP + H(+). The enzyme catalyses L-threonyl-[protein] + ATP = O-phospho-L-threonyl-[protein] + ADP + H(+). Its function is as follows. Phosphorylates specifically 'Ser-10' of histone H3 in vitro and colocalizes with phosphorylated histone H3 during mitosis. Associates with cytoskeletal structures that are necessary for cytokinesis and with the microtubule spindle. Also colocalizes with gamma-tubulin and function in microtubule organizing centers (MTOCs). In contrast with the mammalian B-type Aurora, AUR1 has no kinase activity toward 'Ser-28' of histone H3. This is Serine/threonine-protein kinase Aurora-1 (AUR1) from Arabidopsis thaliana (Mouse-ear cress).